The chain runs to 515 residues: Bifunctional purine biosynthesis protein PurH (515 aa).

An MGS-like domain is found at 1–145; it reads MTKRVLISVS…KNHASVTVVV (145 aa).

It belongs to the PurH family.

It carries out the reaction (6R)-10-formyltetrahydrofolate + 5-amino-1-(5-phospho-beta-D-ribosyl)imidazole-4-carboxamide = 5-formamido-1-(5-phospho-D-ribosyl)imidazole-4-carboxamide + (6S)-5,6,7,8-tetrahydrofolate. It catalyses the reaction IMP + H2O = 5-formamido-1-(5-phospho-D-ribosyl)imidazole-4-carboxamide. It participates in purine metabolism; IMP biosynthesis via de novo pathway; 5-formamido-1-(5-phospho-D-ribosyl)imidazole-4-carboxamide from 5-amino-1-(5-phospho-D-ribosyl)imidazole-4-carboxamide (10-formyl THF route): step 1/1. Its pathway is purine metabolism; IMP biosynthesis via de novo pathway; IMP from 5-formamido-1-(5-phospho-D-ribosyl)imidazole-4-carboxamide: step 1/1. This is Bifunctional purine biosynthesis protein PurH from Streptococcus pneumoniae serotype 2 (strain D39 / NCTC 7466).